The primary structure comprises 448 residues: Exodeoxyribonuclease 7 large subunit (448 aa).

The protein belongs to the XseA family. As to quaternary structure, heterooligomer composed of large and small subunits.

It localises to the cytoplasm. It carries out the reaction Exonucleolytic cleavage in either 5'- to 3'- or 3'- to 5'-direction to yield nucleoside 5'-phosphates.. Functionally, bidirectionally degrades single-stranded DNA into large acid-insoluble oligonucleotides, which are then degraded further into small acid-soluble oligonucleotides. The chain is Exodeoxyribonuclease 7 large subunit from Shewanella baltica (strain OS195).